Here is a 286-residue protein sequence, read N- to C-terminus: MTTAATAAAIVTAGSVRFGNDLPLAVIAGPCQLESRGHALEVASALKEIATRLNIGLVYKTSFDKANRTSGSAARGLGLAQSLPIFAEIRSSLGLPVLTDIHDASQCAEVAQAVDVLQIPAFLCRQTDLLLAAAATGKVVNVKKGQFLAPWDMANVVAKITGAGNPNVLATERGVSFGYNTLISDMRSLPIMARTTGAPVIFDATHSVQQPGGQGTSSGGQREFVPVLARAAVAVGVAGVFIETHPDPDHAPSDGPNMVPLAEFEGLLRRLMAFDKLAKAPATDTR.

It belongs to the KdsA family.

It is found in the cytoplasm. The catalysed reaction is D-arabinose 5-phosphate + phosphoenolpyruvate + H2O = 3-deoxy-alpha-D-manno-2-octulosonate-8-phosphate + phosphate. The protein operates within carbohydrate biosynthesis; 3-deoxy-D-manno-octulosonate biosynthesis; 3-deoxy-D-manno-octulosonate from D-ribulose 5-phosphate: step 2/3. Its pathway is bacterial outer membrane biogenesis; lipopolysaccharide biosynthesis. The protein is 2-dehydro-3-deoxyphosphooctonate aldolase of Bradyrhizobium sp. (strain BTAi1 / ATCC BAA-1182).